A 426-amino-acid chain; its full sequence is uncharacterized protein (426 aa).

Belongs to the serpin family.

This is an uncharacterized protein from Methanosarcina acetivorans (strain ATCC 35395 / DSM 2834 / JCM 12185 / C2A).